A 296-amino-acid polypeptide reads, in one-letter code: Phosphatidylserine decarboxylase proenzyme (296 aa).

Catalysis depends on charge relay system; for autoendoproteolytic cleavage activity residues Asp113, His169, and Ser256. Ser256 (schiff-base intermediate with substrate; via pyruvic acid; for decarboxylase activity) is an active-site residue. Position 256 is a pyruvic acid (Ser); by autocatalysis (Ser256).

It belongs to the phosphatidylserine decarboxylase family. PSD-B subfamily. Prokaryotic type II sub-subfamily. Heterodimer of a large membrane-associated beta subunit and a small pyruvoyl-containing alpha subunit. Pyruvate is required as a cofactor. Post-translationally, is synthesized initially as an inactive proenzyme. Formation of the active enzyme involves a self-maturation process in which the active site pyruvoyl group is generated from an internal serine residue via an autocatalytic post-translational modification. Two non-identical subunits are generated from the proenzyme in this reaction, and the pyruvate is formed at the N-terminus of the alpha chain, which is derived from the carboxyl end of the proenzyme. The autoendoproteolytic cleavage occurs by a canonical serine protease mechanism, in which the side chain hydroxyl group of the serine supplies its oxygen atom to form the C-terminus of the beta chain, while the remainder of the serine residue undergoes an oxidative deamination to produce ammonia and the pyruvoyl prosthetic group on the alpha chain. During this reaction, the Ser that is part of the protease active site of the proenzyme becomes the pyruvoyl prosthetic group, which constitutes an essential element of the active site of the mature decarboxylase.

The protein localises to the cell membrane. The enzyme catalyses a 1,2-diacyl-sn-glycero-3-phospho-L-serine + H(+) = a 1,2-diacyl-sn-glycero-3-phosphoethanolamine + CO2. It participates in phospholipid metabolism; phosphatidylethanolamine biosynthesis; phosphatidylethanolamine from CDP-diacylglycerol: step 2/2. Its function is as follows. Catalyzes the formation of phosphatidylethanolamine (PtdEtn) from phosphatidylserine (PtdSer). This chain is Phosphatidylserine decarboxylase proenzyme, found in Clostridium beijerinckii (strain ATCC 51743 / NCIMB 8052) (Clostridium acetobutylicum).